A 72-amino-acid chain; its full sequence is Large ribosomal subunit protein uL29 (72 aa).

The protein belongs to the universal ribosomal protein uL29 family.

The protein is Large ribosomal subunit protein uL29 (rpmC) of Chlamydia muridarum (strain MoPn / Nigg).